The following is a 599-amino-acid chain: Adenine deaminase (599 aa).

This sequence belongs to the metallo-dependent hydrolases superfamily. Adenine deaminase family. The cofactor is Mn(2+).

It carries out the reaction adenine + H2O + H(+) = hypoxanthine + NH4(+). The protein is Adenine deaminase of Clostridium botulinum (strain Langeland / NCTC 10281 / Type F).